The sequence spans 34 residues: Photosystem II reaction center protein M (34 aa).

Residues 5–25 (ILAFIATALFILIPTAFLLII) form a helical membrane-spanning segment.

It belongs to the PsbM family. PSII is composed of 1 copy each of membrane proteins PsbA, PsbB, PsbC, PsbD, PsbE, PsbF, PsbH, PsbI, PsbJ, PsbK, PsbL, PsbM, PsbT, PsbX, PsbY, PsbZ, Psb30/Ycf12, at least 3 peripheral proteins of the oxygen-evolving complex and a large number of cofactors. It forms dimeric complexes.

The protein localises to the plastid. It localises to the chloroplast thylakoid membrane. Functionally, one of the components of the core complex of photosystem II (PSII). PSII is a light-driven water:plastoquinone oxidoreductase that uses light energy to abstract electrons from H(2)O, generating O(2) and a proton gradient subsequently used for ATP formation. It consists of a core antenna complex that captures photons, and an electron transfer chain that converts photonic excitation into a charge separation. This subunit is found at the monomer-monomer interface. The chain is Photosystem II reaction center protein M from Agrostis stolonifera (Creeping bentgrass).